Reading from the N-terminus, the 122-residue chain is Large ribosomal subunit protein uL14 (122 aa).

It belongs to the universal ribosomal protein uL14 family. Part of the 50S ribosomal subunit. Forms a cluster with proteins L3 and L19. In the 70S ribosome, L14 and L19 interact and together make contacts with the 16S rRNA in bridges B5 and B8.

In terms of biological role, binds to 23S rRNA. Forms part of two intersubunit bridges in the 70S ribosome. This chain is Large ribosomal subunit protein uL14, found in Corynebacterium kroppenstedtii (strain DSM 44385 / JCM 11950 / CIP 105744 / CCUG 35717).